A 1028-amino-acid polypeptide reads, in one-letter code: Beta-galactosidase (1028 aa).

Substrate-binding residues include asparagine 104 and aspartate 203. Aspartate 203 is a Na(+) binding site. Mg(2+) is bound by residues glutamate 418, histidine 420, and glutamate 463. Substrate contacts are provided by residues glutamate 463 and 539–542 (EYAH). Residue glutamate 463 is the Proton donor of the active site. The Nucleophile role is filled by glutamate 539. Position 599 (asparagine 599) interacts with Mg(2+). Residues phenylalanine 603 and asparagine 606 each coordinate Na(+). Positions 606 and 1004 each coordinate substrate.

The protein belongs to the glycosyl hydrolase 2 family. Homotetramer. Mg(2+) is required as a cofactor. Requires Na(+) as cofactor.

It catalyses the reaction Hydrolysis of terminal non-reducing beta-D-galactose residues in beta-D-galactosides.. The chain is Beta-galactosidase from Enterobacter sp. (strain 638).